The primary structure comprises 1188 residues: DNA-directed RNA polymerase subunit beta (1188 aa).

The protein belongs to the RNA polymerase beta chain family. In terms of assembly, the RNAP catalytic core consists of 2 alpha, 1 beta, 1 beta' and 1 omega subunit. When a sigma factor is associated with the core the holoenzyme is formed, which can initiate transcription.

The catalysed reaction is RNA(n) + a ribonucleoside 5'-triphosphate = RNA(n+1) + diphosphate. Functionally, DNA-dependent RNA polymerase catalyzes the transcription of DNA into RNA using the four ribonucleoside triphosphates as substrates. The sequence is that of DNA-directed RNA polymerase subunit beta from Streptococcus pyogenes serotype M3 (strain ATCC BAA-595 / MGAS315).